The primary structure comprises 697 residues: MAASGWNAVIPKTSSYDYITVSIQPAQQDNKKNLVIEFPPVSYFYGVYWTTDDMIIVRLPASTTSSQDLSKMVTITKLRWTFQNQKFTCSVGSDLAFRIIMTCNVGTMYFTATFLLNTLTSTGTKVYGMFNYVSLSSLVVVVTGNDAAHVEALIAVEGAAVRNQVAKLILWSVTETTNYLSFEKLISKAGKDVESGYYKGDTKTKRAIQALSISQGESWYYTELCTSSPLDVGGSGLAFFMRIRGVGLRSEAGVTPWKVSEIFKPLTSRLESDFSYSIHPEAQEDDSVVVHKAHLLAQNIIRDLGYKTVAELDTAEDSHLPVGSADCLAALLDLLYRRSEEMTLALNREYKPRRRRAAIAPQIQDPAVPAIQTYQNLVAGMLGELNKSQQEVLAFKGKFEQLERKVNNHLAVNPLTKLSRIKQRMDQFETSLAGVSSVVNEVQGLRNSHGQLSTEINRIKEAEGHFLNDLESVRRHLQGETGHLRSQLGNSLVTIFKPIIKMISRDIGMCLKVGSADQSQNDVVALSSRIDRLTQEVVALQNSEKPRLFYLHDKSEIKAAAGALEAVAAHVYLGWMSQRFICPPVLGTVYHHDRYIQGVYYKLVACTIEMVHLDKGTMILLIRDEILPVGVLHEVESNIVLDQCDHVPGIVRLSRDRVSPVDYIEVYEVVDPGVFTLSFSHVIAIYIPRCSGLRLLP.

Residues 516-545 are a coiled coil; that stretch reads ADQSQNDVVALSSRIDRLTQEVVALQNSEK.

This is an uncharacterized protein from Callospermophilus lateralis (Golden-mantled ground squirrel).